The chain runs to 225 residues: Ribosomal RNA small subunit methyltransferase G (225 aa).

S-adenosyl-L-methionine-binding positions include G84, F89, 107-109 (DST), 135-136 (AE), and R154.

The protein belongs to the methyltransferase superfamily. RNA methyltransferase RsmG family.

The protein resides in the cytoplasm. Specifically methylates the N7 position of a guanine in 16S rRNA. In Microcystis aeruginosa (strain NIES-843 / IAM M-2473), this protein is Ribosomal RNA small subunit methyltransferase G.